A 154-amino-acid polypeptide reads, in one-letter code: Ribosome maturation factor RimP (154 aa).

Belongs to the RimP family.

It is found in the cytoplasm. In terms of biological role, required for maturation of 30S ribosomal subunits. The sequence is that of Ribosome maturation factor RimP from Prochlorococcus marinus (strain MIT 9313).